The sequence spans 197 residues: Large ribosomal subunit protein uL10 (197 aa).

The segment at arginine 162–lysine 197 is disordered. Over residues aspartate 179–alanine 188 the composition is skewed to basic and acidic residues.

This sequence belongs to the universal ribosomal protein uL10 family. As to quaternary structure, part of the ribosomal stalk of the 50S ribosomal subunit. The N-terminus interacts with L11 and the large rRNA to form the base of the stalk. The C-terminus forms an elongated spine to which L12 dimers bind in a sequential fashion forming a multimeric L10(L12)X complex.

Forms part of the ribosomal stalk, playing a central role in the interaction of the ribosome with GTP-bound translation factors. This chain is Large ribosomal subunit protein uL10, found in Oenococcus oeni (strain ATCC BAA-331 / PSU-1).